Here is a 514-residue protein sequence, read N- to C-terminus: Peptide chain release factor 3 (514 aa).

One can recognise a tr-type G domain in the interval 8-268; the sequence is KKRRTFAIIS…TFLEFAPEPH (261 aa). Residues 17 to 24, 85 to 89, and 139 to 142 each bind GTP; these read SHPDAGKT, DTPGH, and NKLD.

This sequence belongs to the TRAFAC class translation factor GTPase superfamily. Classic translation factor GTPase family. PrfC subfamily.

It is found in the cytoplasm. Functionally, increases the formation of ribosomal termination complexes and stimulates activities of RF-1 and RF-2. It binds guanine nucleotides and has strong preference for UGA stop codons. It may interact directly with the ribosome. The stimulation of RF-1 and RF-2 is significantly reduced by GTP and GDP, but not by GMP. This Streptococcus uberis (strain ATCC BAA-854 / 0140J) protein is Peptide chain release factor 3.